We begin with the raw amino-acid sequence, 399 residues long: Pyridinium-3,5-bisthiocarboxylic acid mononucleotide nickel insertion protein (399 aa).

The protein belongs to the LarC family.

The catalysed reaction is Ni(II)-pyridinium-3,5-bisthiocarboxylate mononucleotide = pyridinium-3,5-bisthiocarboxylate mononucleotide + Ni(2+). Involved in the biosynthesis of a nickel-pincer cofactor ((SCS)Ni(II) pincer complex). Binds Ni(2+), and functions in nickel delivery to pyridinium-3,5-bisthiocarboxylic acid mononucleotide (P2TMN), to form the mature cofactor. Is thus probably required for the activation of nickel-pincer cofactor-dependent enzymes. In Clostridium kluyveri (strain ATCC 8527 / DSM 555 / NBRC 12016 / NCIMB 10680 / K1), this protein is Pyridinium-3,5-bisthiocarboxylic acid mononucleotide nickel insertion protein.